Consider the following 131-residue polypeptide: MSWQAYVDEHLMCEIEGHHLTSAAIVGHDGAVWAQSTAFPQFKTEEMTNIMKDFDEPGFLAPTGLFLGPTKYMVIQGEPGAVIRGKKGSGGITVKKTGQALVIGIYDEPMTPGQCNMVVERLGDYLLEQGL.

Cysteines 13 and 115 form a disulfide. Residues 81-97 carry the Involved in PIP2 interaction motif; sequence AVIRGKKGSGGITVKKT. Thr-111 is modified (phosphothreonine).

The protein belongs to the profilin family. As to quaternary structure, occurs in many kinds of cells as a complex with monomeric actin in a 1:1 ratio. In terms of processing, phosphorylated by MAP kinases.

The protein resides in the cytoplasm. It is found in the cytoskeleton. Functionally, binds to actin and affects the structure of the cytoskeleton. At high concentrations, profilin prevents the polymerization of actin, whereas it enhances it at low concentrations. The protein is Profilin-10 of Zea mays (Maize).